The following is a 323-amino-acid chain: Glutamyl-Q tRNA(Asp) synthetase (323 aa).

L-glutamate contacts are provided by residues 5 to 9 (RFAPT) and Glu41. The short motif at 8–18 (PTPSGALHLGN) is the 'HIGH' region element. 4 residues coordinate Zn(2+): Cys105, Cys107, Tyr129, and Cys133. Residues Tyr193 and Arg211 each coordinate L-glutamate. The short motif at 249 to 253 (RLAKR) is the 'KMSKS' region element. Lys252 is a binding site for ATP.

The protein belongs to the class-I aminoacyl-tRNA synthetase family. GluQ subfamily. Zn(2+) is required as a cofactor.

Its function is as follows. Catalyzes the tRNA-independent activation of glutamate in presence of ATP and the subsequent transfer of glutamate onto a tRNA(Asp). Glutamate is transferred on the 2-amino-5-(4,5-dihydroxy-2-cyclopenten-1-yl) moiety of the queuosine in the wobble position of the QUC anticodon. In Symbiobacterium thermophilum (strain DSM 24528 / JCM 14929 / IAM 14863 / T), this protein is Glutamyl-Q tRNA(Asp) synthetase.